Here is a 334-residue protein sequence, read N- to C-terminus: Ornithine carbamoyltransferase (334 aa).

Carbamoyl phosphate contacts are provided by residues 57–60, Gln-84, Arg-108, and 135–138; these read STRT and HPTQ. L-ornithine contacts are provided by residues Asn-169, Asp-233, and 237–238; that span reads SM. Residues 275 to 276 and Arg-320 each bind carbamoyl phosphate; that span reads CL.

This sequence belongs to the aspartate/ornithine carbamoyltransferase superfamily. OTCase family.

It is found in the cytoplasm. It catalyses the reaction carbamoyl phosphate + L-ornithine = L-citrulline + phosphate + H(+). Its pathway is amino-acid biosynthesis; L-arginine biosynthesis; L-arginine from L-ornithine and carbamoyl phosphate: step 1/3. Its function is as follows. Reversibly catalyzes the transfer of the carbamoyl group from carbamoyl phosphate (CP) to the N(epsilon) atom of ornithine (ORN) to produce L-citrulline. In Aeromonas hydrophila subsp. hydrophila (strain ATCC 7966 / DSM 30187 / BCRC 13018 / CCUG 14551 / JCM 1027 / KCTC 2358 / NCIMB 9240 / NCTC 8049), this protein is Ornithine carbamoyltransferase.